Consider the following 287-residue polypeptide: Large ribosomal subunit protein uL3 (287 aa).

Residues 228–287 (KAPEAKPAKLSKKKQAKELAKAQAANQQTVEAKVDTPVVEPKPTEVKKAAPVVEKKGEDK) form a disordered region. Basic and acidic residues predominate over residues 269–287 (KPTEVKKAAPVVEKKGEDK).

This sequence belongs to the universal ribosomal protein uL3 family. Part of the 50S ribosomal subunit. Forms a cluster with proteins L14 and L19.

Its function is as follows. One of the primary rRNA binding proteins, it binds directly near the 3'-end of the 23S rRNA, where it nucleates assembly of the 50S subunit. This is Large ribosomal subunit protein uL3 from Mycoplasma pneumoniae (strain ATCC 29342 / M129 / Subtype 1) (Mycoplasmoides pneumoniae).